The sequence spans 100 residues: Small ribosomal subunit protein uS14c (100 aa).

It belongs to the universal ribosomal protein uS14 family. In terms of assembly, part of the 30S ribosomal subunit.

It is found in the plastid. The protein localises to the chloroplast. In terms of biological role, binds 16S rRNA, required for the assembly of 30S particles. The chain is Small ribosomal subunit protein uS14c from Cucumis sativus (Cucumber).